Here is a 238-residue protein sequence, read N- to C-terminus: Photosynthetic NDH subunit of lumenal location 1, chloroplastic (238 aa).

This sequence belongs to the PsbP family. In terms of assembly, part of the chloroplast NDH complex, composed of a mixture of chloroplast and nucleus encoded subunits. Component of the NDH lumenal subcomplex, at least composed of PnsL1, PnsL2, PnsL3, PnsL4 and PnsL5.

It is found in the plastid. Its subcellular location is the chloroplast thylakoid membrane. NDH shuttles electrons from NAD(P)H:plastoquinone, via FMN and iron-sulfur (Fe-S) centers, to quinones in the photosynthetic chain and possibly in a chloroplast respiratory chain. The immediate electron acceptor for the enzyme in this species is believed to be plastoquinone. Couples the redox reaction to proton translocation, and thus conserves the redox energy in a proton gradient. Required for accumulation of the chloroplast NAD(P)H dehydrogenase (NDH) complex. This Arabidopsis thaliana (Mouse-ear cress) protein is Photosynthetic NDH subunit of lumenal location 1, chloroplastic.